The chain runs to 450 residues: UDP-N-acetylmuramoylalanine--D-glutamate ligase (450 aa).

ATP is bound at residue 119–125 (GSNGKTT).

This sequence belongs to the MurCDEF family.

The protein localises to the cytoplasm. The enzyme catalyses UDP-N-acetyl-alpha-D-muramoyl-L-alanine + D-glutamate + ATP = UDP-N-acetyl-alpha-D-muramoyl-L-alanyl-D-glutamate + ADP + phosphate + H(+). Its pathway is cell wall biogenesis; peptidoglycan biosynthesis. In terms of biological role, cell wall formation. Catalyzes the addition of glutamate to the nucleotide precursor UDP-N-acetylmuramoyl-L-alanine (UMA). The protein is UDP-N-acetylmuramoylalanine--D-glutamate ligase of Bacillus cereus (strain ATCC 10987 / NRS 248).